The primary structure comprises 679 residues: Transketolase (679 aa).

Residue H30 coordinates substrate. Thiamine diphosphate is bound by residues H69 and G116–L118. D157 lines the Mg(2+) pocket. Residues G158 and N187 each coordinate thiamine diphosphate. Positions 187 and 189 each coordinate Mg(2+). Substrate contacts are provided by H262, R358, and S385. H262 is a binding site for thiamine diphosphate. Residues E417 and F444 each contribute to the thiamine diphosphate site. The active-site Proton donor is the E417. Positions 468, 476, and 527 each coordinate substrate.

This sequence belongs to the transketolase family. In terms of assembly, homodimer. Mg(2+) serves as cofactor. Requires Ca(2+) as cofactor. The cofactor is Mn(2+). It depends on Co(2+) as a cofactor. Thiamine diphosphate is required as a cofactor.

It carries out the reaction D-sedoheptulose 7-phosphate + D-glyceraldehyde 3-phosphate = aldehydo-D-ribose 5-phosphate + D-xylulose 5-phosphate. In terms of biological role, catalyzes the transfer of a two-carbon ketol group from a ketose donor to an aldose acceptor, via a covalent intermediate with the cofactor thiamine pyrophosphate. The chain is Transketolase (TKL1) from Kluyveromyces lactis (strain ATCC 8585 / CBS 2359 / DSM 70799 / NBRC 1267 / NRRL Y-1140 / WM37) (Yeast).